A 208-amino-acid chain; its full sequence is dTTP/UTP pyrophosphatase (208 aa).

Aspartate 79 functions as the Proton acceptor in the catalytic mechanism.

Belongs to the Maf family. YhdE subfamily. A divalent metal cation is required as a cofactor.

It localises to the cytoplasm. The enzyme catalyses dTTP + H2O = dTMP + diphosphate + H(+). It catalyses the reaction UTP + H2O = UMP + diphosphate + H(+). In terms of biological role, nucleoside triphosphate pyrophosphatase that hydrolyzes dTTP and UTP. May have a dual role in cell division arrest and in preventing the incorporation of modified nucleotides into cellular nucleic acids. This Mesorhizobium japonicum (strain LMG 29417 / CECT 9101 / MAFF 303099) (Mesorhizobium loti (strain MAFF 303099)) protein is dTTP/UTP pyrophosphatase.